Consider the following 148-residue polypeptide: Calcium-permeable cation-selective channel WeiTsing (148 aa).

Residues Met1 to Ser25 lie on the Cytoplasmic side of the membrane. Residues Ala26–Val46 traverse the membrane as a helical segment. Topologically, residues Ser47 to Ser51 are lumenal. A helical membrane pass occupies residues Val52 to Val72. The Cytoplasmic portion of the chain corresponds to Leu73–Arg90. The helical transmembrane segment at Leu91–Val110 threads the bilayer. Topologically, residues Val111–Ser116 are lumenal. A helical membrane pass occupies residues Ile117–Leu133. The Cytoplasmic portion of the chain corresponds to Glu134–Val148.

Forms pentamers with a central pore to produce an ion channel.

The protein resides in the endoplasmic reticulum membrane. It carries out the reaction Ca(2+)(in) = Ca(2+)(out). The enzyme catalyses Na(+)(in) = Na(+)(out). Functionally, calcium-permeable cation-selective channel conferring a broad-spectrum clubroot resistance by supporting cytosolic Ca(2+) increase in root pericycle cells. Triggers immunity toward fungal pathogens such as Plasmodiophora brassicae (Pb) and induces defenses. Also permeable to sodium ion Na(+) and possibly other cations. This is Calcium-permeable cation-selective channel WeiTsing from Arabidopsis thaliana (Mouse-ear cress).